A 602-amino-acid chain; its full sequence is Proteasome-associated ATPase (602 aa).

Low complexity predominate over residues 1-17; sequence MSGPRSGSGSDGSTGRP. Residues 1–31 form a disordered region; sequence MSGPRSGSGSDGSTGRPGDAESRRSAYEKET. Positions 18–31 are enriched in basic and acidic residues; it reads GDAESRRSAYEKET. Positions 19–106 form a coiled coil; that stretch reads DAESRRSAYE…LKEEVDRLAQ (88 aa). 289–294 serves as a coordination point for ATP; it reads GCGKTL. Residues 601–602 are docks into pockets in the proteasome alpha-ring; the sequence is YL.

Belongs to the AAA ATPase family. In terms of assembly, homohexamer. Assembles into a hexameric ring structure that caps the 20S proteasome core. Strongly interacts with the prokaryotic ubiquitin-like protein Pup through a hydrophobic interface; the interacting region of ARC lies in its N-terminal coiled-coil domain. There is one Pup binding site per ARC hexamer ring. Upon ATP-binding, the C-terminus of ARC interacts with the alpha-rings of the proteasome core, possibly by binding to the intersubunit pockets.

It functions in the pathway protein degradation; proteasomal Pup-dependent pathway. In terms of biological role, ATPase which is responsible for recognizing, binding, unfolding and translocation of pupylated proteins into the bacterial 20S proteasome core particle. May be essential for opening the gate of the 20S proteasome via an interaction with its C-terminus, thereby allowing substrate entry and access to the site of proteolysis. Thus, the C-termini of the proteasomal ATPase may function like a 'key in a lock' to induce gate opening and therefore regulate proteolysis. This chain is Proteasome-associated ATPase, found in Frankia casuarinae (strain DSM 45818 / CECT 9043 / HFP020203 / CcI3).